The primary structure comprises 833 residues: Probable serine/threonine-protein kinase DDB_G0277165 (833 aa).

Positions 9–262 (FIIGKTLGQG…IKEIKEHPWF (254 aa)) constitute a Protein kinase domain. ATP contacts are provided by residues 15–23 (LGQGTTGKV) and K38. D133 serves as the catalytic Proton acceptor. One can recognise a UBA domain in the interval 288–329 (QIDEDIFRSLMALGVGTIDEVKQQLVSNQKSATLIYYRLLEE). Residues 338-351 (NKYGYKPKETRRNS) show a composition bias toward basic and acidic residues. Disordered regions lie at residues 338-472 (NKYG…ISPS), 528-626 (QALQ…PIEI), and 764-799 (FINPVSPSKQHHHHHHQQQQPQQQQMPPLNLNGGQN). Composition is skewed to low complexity over residues 365–432 (NNNN…NNNN) and 441–459 (SSSQQPPHIQQPHSQQIPS). The segment covering 460-472 (NSTSQESMQISPS) has biased composition (polar residues). The span at 528–589 (QALQQHHQQQ…SSTSTSPQLS (62 aa)) shows a compositional bias: low complexity. Residues 600–625 (GSMTASTNPATSPTMSHRGKTSSPIE) show a composition bias toward polar residues.

This sequence belongs to the protein kinase superfamily. CAMK Ser/Thr protein kinase family.

The enzyme catalyses L-seryl-[protein] + ATP = O-phospho-L-seryl-[protein] + ADP + H(+). It catalyses the reaction L-threonyl-[protein] + ATP = O-phospho-L-threonyl-[protein] + ADP + H(+). The chain is Probable serine/threonine-protein kinase DDB_G0277165 from Dictyostelium discoideum (Social amoeba).